Here is a 144-residue protein sequence, read N- to C-terminus: Actin-associated protein FAM107A (144 aa).

Positions 70–90 form a coiled coil; sequence VLEHRRRNQLIKKKEEELEAK. A Nuclear localization signal motif is present at residues 74 to 84; that stretch reads RRRNQLIKKKE. The segment at 104–123 is disordered; it reads QQRLNQLENPPQRDEDHAPE. Positions 114-123 are enriched in basic and acidic residues; sequence PQRDEDHAPE.

In terms of assembly, interacts with ACTB. Interacts with F-actin. Interacts with PRDX1. Interacts with COMMD1; this interaction stabilizes COMMD1 in the nucleus. Interacts with MAP1A. As to expression, expressed in septum, the neocortex, the CA3 region of the hippocampus and the cerebellum (at protein level).

Its subcellular location is the nucleus. It is found in the cytoplasm. The protein resides in the cytoskeleton. It localises to the stress fiber. The protein localises to the cell junction. Its subcellular location is the focal adhesion. It is found in the cell projection. The protein resides in the ruffle membrane. It localises to the synapse. Stress-inducible actin-binding protein that plays a role in synaptic and cognitive functions by modulating actin filamentous (F-actin) dynamics. Mediates polymerization of globular actin to F-actin. Also binds to, stabilizes and bundles F-actin. Involved in synaptic function by regulating neurite outgrowth in an actin-dependent manner and for the acquisition of hippocampus-dependent cognitive function, such as learning and long-term memory. Plays a role in the actin and microtubule cytoskeleton organization; negatively regulates focal adhesion (FA) assembly promoting malignant glial cell migration in an actin-, microtubule- and MAP1A-dependent manner. Also involved in neuroblastoma G1/S phase cell cycle progression and cell proliferation inhibition by stimulating ubiquitination of NF-kappa-B subunit RELA and NF-kappa-B degradation in a COMMD1- and actin-dependent manner. May play a role in tumor development. This Mus musculus (Mouse) protein is Actin-associated protein FAM107A.